The primary structure comprises 388 residues: Succinate--CoA ligase [ADP-forming] subunit beta (388 aa).

The ATP-grasp domain maps to 9 to 244 (KSLFAEYGLP…PSQDDAREAH (236 aa)). ATP contacts are provided by residues K46, 53-55 (GRG), E99, T102, and E107. Mg(2+)-binding residues include N199 and D213. Substrate-binding positions include N264 and 321–323 (GIV).

This sequence belongs to the succinate/malate CoA ligase beta subunit family. In terms of assembly, heterotetramer of two alpha and two beta subunits. It depends on Mg(2+) as a cofactor.

The enzyme catalyses succinate + ATP + CoA = succinyl-CoA + ADP + phosphate. It catalyses the reaction GTP + succinate + CoA = succinyl-CoA + GDP + phosphate. It functions in the pathway carbohydrate metabolism; tricarboxylic acid cycle; succinate from succinyl-CoA (ligase route): step 1/1. Succinyl-CoA synthetase functions in the citric acid cycle (TCA), coupling the hydrolysis of succinyl-CoA to the synthesis of either ATP or GTP and thus represents the only step of substrate-level phosphorylation in the TCA. The beta subunit provides nucleotide specificity of the enzyme and binds the substrate succinate, while the binding sites for coenzyme A and phosphate are found in the alpha subunit. The polypeptide is Succinate--CoA ligase [ADP-forming] subunit beta (Shewanella sp. (strain ANA-3)).